The primary structure comprises 350 residues: Protein pelota homolog (350 aa).

Belongs to the eukaryotic release factor 1 family. Pelota subfamily. Monomer. It depends on a divalent metal cation as a cofactor.

The protein localises to the cytoplasm. Functionally, may function in recognizing stalled ribosomes, interact with stem-loop structures in stalled mRNA molecules, and effect endonucleolytic cleavage of the mRNA. May play a role in the release non-functional ribosomes and degradation of damaged mRNAs. Has endoribonuclease activity. The sequence is that of Protein pelota homolog from Methanosarcina acetivorans (strain ATCC 35395 / DSM 2834 / JCM 12185 / C2A).